The following is a 293-amino-acid chain: 4-hydroxy-tetrahydrodipicolinate synthase (293 aa).

Threonine 47 is a pyruvate binding site. Tyrosine 136 functions as the Proton donor/acceptor in the catalytic mechanism. The active-site Schiff-base intermediate with substrate is the lysine 164. Position 206 (isoleucine 206) interacts with pyruvate.

Belongs to the DapA family. Homotetramer; dimer of dimers.

The protein localises to the cytoplasm. It catalyses the reaction L-aspartate 4-semialdehyde + pyruvate = (2S,4S)-4-hydroxy-2,3,4,5-tetrahydrodipicolinate + H2O + H(+). Its pathway is amino-acid biosynthesis; L-lysine biosynthesis via DAP pathway; (S)-tetrahydrodipicolinate from L-aspartate: step 3/4. In terms of biological role, catalyzes the condensation of (S)-aspartate-beta-semialdehyde [(S)-ASA] and pyruvate to 4-hydroxy-tetrahydrodipicolinate (HTPA). The chain is 4-hydroxy-tetrahydrodipicolinate synthase from Listeria monocytogenes serovar 1/2a (strain ATCC BAA-679 / EGD-e).